The sequence spans 975 residues: Probable dipeptidyl-aminopeptidase B (975 aa).

Basic and acidic residues predominate over residues 1-20; it reads MAEHGHNMWEEEPSKGRDSL. The segment at 1–111 is disordered; that stretch reads MAEHGHNMWE…LSAASGSAGK (111 aa). Topologically, residues 1–125 are cytoplasmic; the sequence is MAEHGHNMWE…YRMMDRGLRR (125 aa). Residues 22–31 show a composition bias toward low complexity; sequence SDSSASTTSL. The segment covering 68–84 has biased composition (acidic residues); it reads LDDEDPLKDEASGDYDL. A helical; Signal-anchor for type II membrane protein membrane pass occupies residues 126–146; the sequence is VLIIASLVFVTAWVGGLFIYI. At 147–975 the chain is on the vacuolar side; that stretch reads SHKSYLHGSE…IDNAKPQGKR (829 aa). Asparagine 207, asparagine 397, and asparagine 622 each carry an N-linked (GlcNAc...) asparagine glycan. Serine 826 serves as the catalytic Charge relay system. A glycan (N-linked (GlcNAc...) asparagine) is linked at asparagine 885. Residues aspartate 903 and histidine 936 each act as charge relay system in the active site.

It belongs to the peptidase S9B family.

The protein resides in the vacuole membrane. The catalysed reaction is Release of an N-terminal dipeptide, Xaa-Yaa-|-Zaa-, from a polypeptide, preferentially when Yaa is Pro, provided Zaa is neither Pro nor hydroxyproline.. Its function is as follows. Type IV dipeptidyl-peptidase which removes N-terminal dipeptides sequentially from polypeptides having unsubstituted N-termini provided that the penultimate residue is proline. The sequence is that of Probable dipeptidyl-aminopeptidase B (DAPB) from Grosmannia clavigera (strain kw1407 / UAMH 11150) (Blue stain fungus).